We begin with the raw amino-acid sequence, 112 residues long: Iron-sulfur cluster assembly protein CyaY (112 aa).

This sequence belongs to the frataxin family.

Its function is as follows. Involved in iron-sulfur (Fe-S) cluster assembly. May act as a regulator of Fe-S biogenesis. The chain is Iron-sulfur cluster assembly protein CyaY from Herminiimonas arsenicoxydans.